The primary structure comprises 309 residues: tRNA N6-adenosine threonylcarbamoyltransferase (309 aa).

Residues H108 and H112 each contribute to the Fe cation site. Substrate-binding positions include 130–134 (LVSGG), D163, G176, D180, and N269. D293 is a binding site for Fe cation.

Belongs to the KAE1 / TsaD family. Fe(2+) is required as a cofactor.

Its subcellular location is the cytoplasm. The catalysed reaction is L-threonylcarbamoyladenylate + adenosine(37) in tRNA = N(6)-L-threonylcarbamoyladenosine(37) in tRNA + AMP + H(+). Functionally, required for the formation of a threonylcarbamoyl group on adenosine at position 37 (t(6)A37) in tRNAs that read codons beginning with adenine. Is involved in the transfer of the threonylcarbamoyl moiety of threonylcarbamoyl-AMP (TC-AMP) to the N6 group of A37, together with TsaE and TsaB. TsaD likely plays a direct catalytic role in this reaction. This is tRNA N6-adenosine threonylcarbamoyltransferase from Mycoplasmopsis agalactiae (strain NCTC 10123 / CIP 59.7 / PG2) (Mycoplasma agalactiae).